The primary structure comprises 172 residues: Large ribosomal subunit protein uL10 (172 aa).

Belongs to the universal ribosomal protein uL10 family. In terms of assembly, part of the ribosomal stalk of the 50S ribosomal subunit. The N-terminus interacts with L11 and the large rRNA to form the base of the stalk. The C-terminus forms an elongated spine to which L12 dimers bind in a sequential fashion forming a multimeric L10(L12)X complex.

Functionally, forms part of the ribosomal stalk, playing a central role in the interaction of the ribosome with GTP-bound translation factors. In Chlamydia trachomatis serovar L2 (strain ATCC VR-902B / DSM 19102 / 434/Bu), this protein is Large ribosomal subunit protein uL10.